The following is an 838-amino-acid chain: MTDTTLPPDDSLDRIEPVDIQQEMQRSYIDYAMSVIVGRALPEVRDGLKPVHRRVLYAMFDSGFRPDRSHAKSARSVAETMGNYHPHGDASIYDSLVRMAQPWSLRYPLVDGQGNFGSPGNDPPAAMRYTEARLTPLAMEMLREIDEETVDFIPNYDGRVQEPTVLPSRFPNLLANGSGGIAVGMATNIPPHNLRELADAVFWALENHDADEEETLAAVMGRVKGPDFPTAGLIVGSQGTADAYKTGRGSIRMRGVVEVEEDSRGRTSLVITELPYQVNHDNFITSIAEQVRDGKLAGISNIEDQSSDRVGLRIVIEIKRDAVAKVVINNLYKHTQLQTSFGANMLAIVDGVPRTLRLDQLIRYYVDHQLDVIVRRTTYRLRKANERAHILRGLVKALDALDEVIALIRASETVDIARAGLIELLDIDEIQAQAILDMQLRRLAALERQRIIDDLAKIEAEIADLEDILAKPERQRGIVRDELAEIVDRHGDDRRTRIIAADGDVSDEDLIAREDVVVTITETGYAKRTKTDLYRSQKRGGKGVQGAGLKQDDIVAHFFVCSTHDLILFFTTQGRVYRAKAYDLPEASRTARGQHVANLLAFQPEERIAQVIQIRGYTDAPYLVLATRNGLVKKSKLTDFDSNRSGGIVAVNLRDNDELVGAVLCSADDDLLLVSANGQSIRFSATDEALRPMGRATSGVQGMRFNIDDRLLSLNVVREGTYLLVATSGGYAKRTAIEEYPVQGRGGKGVLTVMYDRRRGRLVGALIVDDDSELYAVTSGGGVIRTAARQVRKAGRQTKGVRLMNLGEGDTLLAIARNAEESGDDNAVDANGADQTGN.

Positions Leu-41–Leu-510 constitute a Topo IIA-type catalytic domain. The O-(5'-phospho-DNA)-tyrosine intermediate role is filled by Tyr-129. A GyrA-box motif is present at residues Gln-537–Gly-543.

Belongs to the type II topoisomerase GyrA/ParC subunit family. Heterotetramer, composed of two GyrA and two GyrB chains. In the heterotetramer, GyrA contains the active site tyrosine that forms a transient covalent intermediate with DNA, while GyrB binds cofactors and catalyzes ATP hydrolysis.

It localises to the cytoplasm. The catalysed reaction is ATP-dependent breakage, passage and rejoining of double-stranded DNA.. In terms of biological role, a type II topoisomerase that negatively supercoils closed circular double-stranded (ds) DNA in an ATP-dependent manner to modulate DNA topology and maintain chromosomes in an underwound state. Negative supercoiling favors strand separation, and DNA replication, transcription, recombination and repair, all of which involve strand separation. Also able to catalyze the interconversion of other topological isomers of dsDNA rings, including catenanes and knotted rings. Type II topoisomerases break and join 2 DNA strands simultaneously in an ATP-dependent manner. The polypeptide is DNA gyrase subunit A (Mycobacterium tuberculosis (strain CDC 1551 / Oshkosh)).